The sequence spans 415 residues: DNA polymerase IV 2 (415 aa).

A UmuC domain is found at 7-183 (ILHADLDAFY…LPVSLMWGVG (177 aa)). 2 residues coordinate Mg(2+): aspartate 11 and aspartate 101. Residue glutamate 102 is part of the active site.

The protein belongs to the DNA polymerase type-Y family. In terms of assembly, monomer. Requires Mg(2+) as cofactor.

It localises to the cytoplasm. It catalyses the reaction DNA(n) + a 2'-deoxyribonucleoside 5'-triphosphate = DNA(n+1) + diphosphate. Poorly processive, error-prone DNA polymerase involved in untargeted mutagenesis. Copies undamaged DNA at stalled replication forks, which arise in vivo from mismatched or misaligned primer ends. These misaligned primers can be extended by PolIV. Exhibits no 3'-5' exonuclease (proofreading) activity. May be involved in translesional synthesis, in conjunction with the beta clamp from PolIII. The sequence is that of DNA polymerase IV 2 (dinB2) from Mesorhizobium japonicum (strain LMG 29417 / CECT 9101 / MAFF 303099) (Mesorhizobium loti (strain MAFF 303099)).